The primary structure comprises 114 residues: Large ribosomal subunit protein uL22 (114 aa).

It belongs to the universal ribosomal protein uL22 family. In terms of assembly, part of the 50S ribosomal subunit.

Functionally, this protein binds specifically to 23S rRNA; its binding is stimulated by other ribosomal proteins, e.g. L4, L17, and L20. It is important during the early stages of 50S assembly. It makes multiple contacts with different domains of the 23S rRNA in the assembled 50S subunit and ribosome. Its function is as follows. The globular domain of the protein is located near the polypeptide exit tunnel on the outside of the subunit, while an extended beta-hairpin is found that lines the wall of the exit tunnel in the center of the 70S ribosome. The chain is Large ribosomal subunit protein uL22 from Desulfosudis oleivorans (strain DSM 6200 / JCM 39069 / Hxd3) (Desulfococcus oleovorans).